Here is a 1119-residue protein sequence, read N- to C-terminus: Multiple epidermal growth factor-like domains protein 10 (1119 aa).

An N-terminal signal peptide occupies residues 1 to 22 (MMSSCGPLLLAVSCCLVALTSS). Over 23 to 851 (LNLDDPNVCS…ALPMDSYQIG (829 aa)) the chain is Extracellular. One can recognise an EMI domain in the interval 27 to 104 (DPNVCSHWES…FYESGDICVP (78 aa)). 15 disulfides stabilise this stretch: cysteine 31–cysteine 92, cysteine 57–cysteine 66, cysteine 91–cysteine 102, cysteine 102–cysteine 115, cysteine 106–cysteine 121, cysteine 123–cysteine 132, cysteine 145–cysteine 157, cysteine 151–cysteine 164, cysteine 166–cysteine 175, cysteine 188–cysteine 200, cysteine 194–cysteine 207, cysteine 209–cysteine 218, cysteine 231–cysteine 243, cysteine 237–cysteine 250, and cysteine 252–cysteine 260. EGF-like domains lie at 98 to 133 (SGDICVPHCAEKCVHGRCVAPNTCQCEPGWGGADCS), 141 to 176 (WGPHCSSRCQCKNEALCNPITGACICAPGYHGWRCE), 184 to 219 (YGNNCQQKCLCQNNATCHHITGECVCSPGYTGAFCE), and 227 to 261 (HGQQCEERCPCQNGGVCHHVTGECSCPAGWGMVCG). An N-linked (GlcNAc...) asparagine glycan is attached at asparagine 197. The N-linked (GlcNAc...) asparagine glycan is linked to asparagine 272. EGF-like domains follow at residues 274–304 (SQECQCHNGGICSPSTGQCVCSSGYTGERCQ) and 312–347 (YGIGCSQACRCVNGAQCYHVSGACLCEQGYTGESCE). 6 cysteine pairs are disulfide-bonded: cysteine 277/cysteine 285, cysteine 279/cysteine 292, cysteine 294/cysteine 303, cysteine 316/cysteine 328, cysteine 322/cysteine 335, and cysteine 337/cysteine 346. Residues asparagine 369 and asparagine 393 are each glycosylated (N-linked (GlcNAc...) asparagine). EGF-like domains follow at residues 401 to 436 (YGEACQEVCRCQNGADCHSVSGECICAPGYKGSDCA), 444 to 479 (YGINCTSLCSCKNGAICSPIDGSCSCQAGWHGVDCS), 487 to 522 (WGLGCNLSCVCGNGGACNALDGKCTCTPGWRGDRCD), 573 to 608 (WGPNCSLSCNCKNSASCSPDEGACECAPGFRGTTCQ), 616 to 653 (FGHRCSQACPHCVHSNGPCHHVTGQCECLPGFKGALCN), 666 to 696 (GGSCTCTNNGTCSPMDGSCQCYPGWIGSDCS), 709 to 739 (IHTCNCHNGAFCSAYDGECKCTAGWTGLYCT), 747 to 782 (YGKDCVQACQCENGADCNHISGQCTCRTGFMGRHCE), and 795 to 825 (RQVCDCLNNSTCDHMTGTCYCNPGWKGTRCD). Cystine bridges form between cysteine 405/cysteine 417, cysteine 411/cysteine 424, and cysteine 426/cysteine 435. Residue asparagine 447 is glycosylated (N-linked (GlcNAc...) asparagine). 6 disulfide bridges follow: cysteine 448-cysteine 460, cysteine 454-cysteine 467, cysteine 469-cysteine 478, cysteine 491-cysteine 503, cysteine 497-cysteine 510, and cysteine 512-cysteine 521. N-linked (GlcNAc...) asparagine glycosylation occurs at asparagine 492. Asparagine 576 carries an N-linked (GlcNAc...) asparagine glycan. Intrachain disulfides connect cysteine 577–cysteine 589, cysteine 583–cysteine 596, cysteine 598–cysteine 607, cysteine 620–cysteine 634, cysteine 624–cysteine 641, cysteine 643–cysteine 652, cysteine 669–cysteine 677, cysteine 671–cysteine 684, cysteine 686–cysteine 695, cysteine 712–cysteine 720, cysteine 714–cysteine 727, cysteine 729–cysteine 738, cysteine 751–cysteine 763, cysteine 757–cysteine 770, cysteine 772–cysteine 781, cysteine 798–cysteine 806, cysteine 800–cysteine 813, and cysteine 815–cysteine 824. Asparagine 674 carries N-linked (GlcNAc...) asparagine glycosylation. The N-linked (GlcNAc...) asparagine glycan is linked to asparagine 803. The chain crosses the membrane as a helical span at residues 852-872 (AITGIIILVLLVLILLLLFII). The Cytoplasmic segment spans residues 873 to 1119 (YRKKQKGKES…SSPSPTEDSK (247 aa)).

This sequence belongs to the MEGF family.

The protein localises to the cell membrane. In terms of biological role, membrane receptor involved in phagocytosis by macrophages and astrocytes of apoptotic cells. Essential factor in the regulation of muscle development including myogenesis. Likely plays a key role in muscle cell proliferation, adhesion and motility. May control the balance between skeletal muscle satellite cells proliferation and differentiation through regulation of the notch signaling pathway. The protein is Multiple epidermal growth factor-like domains protein 10 of Danio rerio (Zebrafish).